The following is a 440-amino-acid chain: Indoleamine 2,3-dioxygenase qulI (440 aa).

H347 provides a ligand contact to heme.

It belongs to the indoleamine 2,3-dioxygenase family. As to quaternary structure, monomer. It depends on heme as a cofactor.

It carries out the reaction D-tryptophan + O2 = N-formyl-D-kynurenine. The catalysed reaction is L-tryptophan + O2 = N-formyl-L-kynurenine. Its pathway is secondary metabolite biosynthesis. Its function is as follows. Indoleamine 2,3-dioxygenase; part of the gene cluster that mediates the biosynthesis of quinolactacin A2 (QUL A2), a fungal alkaloid that features a quinolone-gamma-lactam hybrid, which is a potential pharmacophore for the treatment of cancer and Alzheimer's disease. The quinolone-gamma-lactam hybrid scaffold is synthesized from the combination of L-isoleucine (L-Ile) and the nonproteinogenic amino acid L-kynurenine, followed by quinolone cyclization, oxidative decarboxylation, and lactam formation. Additionally, the N-methyl group is derived from methionine, which might be catalyzed by an S-adenosylmethionine (SAM)-dependent methyltransferase. Bioconversion of L-tryptophan to L-kynurenine could be catalyzed by the indoleamine-2,3-dioxygenase (IDO) qulI to produce an unstable product, N-formyl-L-kynurenine, followed by kynurenine formamidase catalyzed hydrolysis. QulM then acts as a methyltransferase that methylates L-kynurenine at the N-4 position. The FMN-dependent alpha-hydroxy acid dehydrogenase qulF than functions as an oxidative decarboxylase which converts N-methylkynurenine into 2-aminobenzoylacetamide via 2 tandem reactions, including dehydrogenation and decarboxylation. An amidase located outside of the qul gene cluster further produces the unstable beta-keto acid precursor N-methyl-2-aminobenzoylacetate, which could be spontaneously dehydrated to form N-methyl-4-hydroxy-2-quinolone. The NRPS qulB is able to incorporate N-methyl-2-aminobenzoylacetate and efficiently compete with the spontaneous reaction. By further extending the beta-keto acid with L-Ile, qulA performs a Dieckmann condensation to form the gamma-lactam ring and release a 4-ketopyrrolidinone intermediate from the assembly line. This intermediate could plausibly further undergo a spontaneous cyclization to yield the final quinolone-gamma-lactam hybrid structure. The chain is Indoleamine 2,3-dioxygenase qulI from Penicillium citrinum.